The sequence spans 533 residues: DNA primase large subunit (533 aa).

Positions 298, 377, 393, and 433 each coordinate [4Fe-4S] cluster. Residues 466-492 (RQKRANGSAPPKARIRPDIKGHGDRSM) form a disordered region. The segment covering 480-490 (IRPDIKGHGDR) has biased composition (basic and acidic residues).

It belongs to the eukaryotic-type primase large subunit family. Heterodimer of a catalytic subunit Prim1 and a regulatory subunit Prim2, also known as the DNA primase complex. Component of the alpha DNA polymerase complex (also known as the alpha DNA polymerase-primase complex) consisting of four subunits: the catalytic subunit PolA1, the regulatory subunit PolA2, and the primase complex subunits Prim1 and Prim2 respectively. PolA1 associates with the DNA primase complex before association with PolA2. [4Fe-4S] cluster serves as cofactor. Expressed in embryos (at protein level).

Its function is as follows. Regulatory subunit of the DNA primase complex and component of the DNA polymerase alpha complex (also known as the alpha DNA polymerase-primase complex) which play an essential role in the initiation of DNA synthesis. During the S phase of the cell cycle, the DNA polymerase alpha complex (composed of a catalytic subunit PolA1, an accessory subunit PolA2 and two primase subunits, the catalytic subunit Prim1 and the regulatory subunit Prim2) is recruited to DNA at the replicative forks. The primase subunit of the polymerase alpha complex initiates DNA synthesis by oligomerising short RNA primers on both leading and lagging strands. These primers are initially extended by the polymerase alpha catalytic subunit and subsequently transferred to polymerase delta and polymerase epsilon for processive synthesis on the lagging and leading strand, respectively. In the primase complex, both subunits are necessary for the initial di-nucleotide formation, but the extension of the primer depends only on the catalytic subunit. Stabilizes and modulates the activity of the catalytic subunit. In Drosophila melanogaster (Fruit fly), this protein is DNA primase large subunit.